The sequence spans 374 residues: Queuine tRNA-ribosyltransferase (374 aa).

Residue aspartate 94 is the Proton acceptor of the active site. Substrate-binding positions include 94–98, aspartate 148, glutamine 191, and glycine 218; that span reads DSGGF. The interval 249–255 is RNA binding; that stretch reads GVGSPDY. Aspartate 268 functions as the Nucleophile in the catalytic mechanism. The tract at residues 273–277 is RNA binding; important for wobble base 34 recognition; the sequence is TRIGR. Zn(2+) is bound by residues cysteine 306, cysteine 308, cysteine 311, and histidine 337.

Belongs to the queuine tRNA-ribosyltransferase family. Homodimer. Within each dimer, one monomer is responsible for RNA recognition and catalysis, while the other monomer binds to the replacement base PreQ1. Zn(2+) serves as cofactor.

The catalysed reaction is 7-aminomethyl-7-carbaguanine + guanosine(34) in tRNA = 7-aminomethyl-7-carbaguanosine(34) in tRNA + guanine. It functions in the pathway tRNA modification; tRNA-queuosine biosynthesis. Functionally, catalyzes the base-exchange of a guanine (G) residue with the queuine precursor 7-aminomethyl-7-deazaguanine (PreQ1) at position 34 (anticodon wobble position) in tRNAs with GU(N) anticodons (tRNA-Asp, -Asn, -His and -Tyr). Catalysis occurs through a double-displacement mechanism. The nucleophile active site attacks the C1' of nucleotide 34 to detach the guanine base from the RNA, forming a covalent enzyme-RNA intermediate. The proton acceptor active site deprotonates the incoming PreQ1, allowing a nucleophilic attack on the C1' of the ribose to form the product. After dissociation, two additional enzymatic reactions on the tRNA convert PreQ1 to queuine (Q), resulting in the hypermodified nucleoside queuosine (7-(((4,5-cis-dihydroxy-2-cyclopenten-1-yl)amino)methyl)-7-deazaguanosine). This is Queuine tRNA-ribosyltransferase from Acetivibrio thermocellus (strain ATCC 27405 / DSM 1237 / JCM 9322 / NBRC 103400 / NCIMB 10682 / NRRL B-4536 / VPI 7372) (Clostridium thermocellum).